Here is a 349-residue protein sequence, read N- to C-terminus: DNA-directed RNA polymerase subunit Rpo1N (349 aa).

The interval Glu-306–Asp-349 is disordered. Residues Ala-324–Ser-334 are compositionally biased toward basic and acidic residues.

This sequence belongs to the RNA polymerase beta' chain family. As to quaternary structure, part of the RNA polymerase complex.

Its subcellular location is the cytoplasm. The catalysed reaction is RNA(n) + a ribonucleoside 5'-triphosphate = RNA(n+1) + diphosphate. DNA-dependent RNA polymerase (RNAP) catalyzes the transcription of DNA into RNA using the four ribonucleoside triphosphates as substrates. Forms the clamp head domain. The protein is DNA-directed RNA polymerase subunit Rpo1N of Halococcus morrhuae (Micrococcus morrhuae).